A 463-amino-acid chain; its full sequence is O-phospho-L-seryl-tRNA:Cys-tRNA synthase 2 (463 aa).

Pyridoxal 5'-phosphate contacts are provided by residues 154–155, Asn-259, and 282–284; these read AR and SGH. The residue at position 285 (Lys-285) is an N6-(pyridoxal phosphate)lysine.

This sequence belongs to the SepCysS family. As to quaternary structure, homodimer. Interacts with SepRS. Pyridoxal 5'-phosphate serves as cofactor.

It catalyses the reaction O-phospho-L-seryl-tRNA(Cys) + hydrogen sulfide + H(+) = L-cysteinyl-tRNA(Cys) + phosphate. Functionally, converts O-phospho-L-seryl-tRNA(Cys) (Sep-tRNA(Cys)) to L-cysteinyl-tRNA(Cys) (Cys-tRNA(Cys)). In Methanocella arvoryzae (strain DSM 22066 / NBRC 105507 / MRE50), this protein is O-phospho-L-seryl-tRNA:Cys-tRNA synthase 2.